The primary structure comprises 1160 residues: MDINHQNQCIPYNCLSNPDAILLDAERLETGNTVADISLGLINFLYSNFVPGGGFIVGLLELIWGFVGPSQWEIFLAQIEQLISQRIEEFARNQAISRLEGLSNNYEIYTETFRAWEKDPSNPALREEMRTQFNVMNSALIAAIPLLRVRNYEVALLSVYVQAANLHLSVLRDVSVYGQRWGFDPATVNSRYSDLTRLIHVYTDHCVDTYNDGLKNLEGSRLSDWVVYNRFRRRLTISVLDIIAFFPNYDIEAYPIQTASQLTREVYLDLPFVNETLSPPASYPTFSAAESAIIRSPHLVDFLNSFTIYTDSLASYAYWGGHLVNSFRTGTTTNLIRSPLYGREGNTERPVTISASPSVPIFRTLSYFTGLNNNNPVAGIEGVEFQNTISRSIYRKSGPIDSFSELPPQDVSVSPAIGYSHRLCHATFLERISGPRIAGTVFSWTHRSASPINEVSPSRITQIPWVKAHTLASGASVIKGPGFTGGDILTRNSMGDLGALRVTFTGRLPQSYYIRFRYASVANRSGTFRYSQPPSYGISFPKTMDAGEALTSRSFAHTTLFTPITFSRAQEEFDLYIQSGVYIDRIEFIPVDATFESEINLERAQKAVNALFTSTNQLGLKTDVTDYHIDQVSNLVECLSDEFCLDEKRELSEKVKHAKRLSDERNLLQDPNFRGINRQPDRGWRGSTDITIQGGDDVFKENYVTLTGTFDECYPTYLYQKIDESKLKAYTRYQLRGYIEDSQDLEIYLIRYNAKHEIVNVPGTGSLWPLSVQSPIGKCGEPNRCAPHLEWNPDLDCSCRDEEKCAHHSHHFSLDIDVGCTDLNEDLGVWVIFKIKTQDGHARLGNLEFLEEKPLVGEALARVKRAEKKWRDKREKLELETNIVYKEAKESVDALFVNSQYDQLQADTNIAMIHAADKRVHSIREAYLPELSVIPGVNAGIFEELEGRIFTAYSLYDARNVIKNGDFNNGLSCWNVKGHVDVEEQNNHRSVLVVPEWEAEVSQEVRVCPGRGYILRVTAYKEGYGEGCVTIHEVDNNTDELKFSNCEKEQVYPGNTVACNDYNKNHGANACSSRNRGYDESYESNSSIPADYAPVYEEEAYTDGQRGNPCEFNRGHTPLPAGYVTAELEYFPETDTVWVEIGETEGTFIVDSVELLLMEE.

It belongs to the delta endotoxin family.

Its function is as follows. Promotes colloidosmotic lysis by binding to the midgut epithelial cells of insects. The sequence is that of Pesticidal crystal protein Cry1Db (cry1Db) from Bacillus thuringiensis.